We begin with the raw amino-acid sequence, 607 residues long: Thymidine kinase (607 aa).

Disordered regions lie at residues methionine 1–threonine 160 and aspartate 180–leucine 215. Residues lysine 17 to phenylalanine 32 show a composition bias toward basic and acidic residues. 3 stretches are compositionally biased toward polar residues: residues alanine 88 to proline 106, arginine 148 to threonine 160, and arginine 194 to lysine 203. Glycine 291 to threonine 298 serves as a coordination point for ATP. Residue glutamate 317 is the Proton acceptor of the active site. Glutamine 355 contributes to the substrate binding site. Position 445 (arginine 445) interacts with ATP. Residue arginine 451 participates in substrate binding.

The protein belongs to the herpesviridae thymidine kinase family. In terms of assembly, homodimer.

The protein resides in the virion tegument. The protein localises to the host nucleus. The catalysed reaction is thymidine + ATP = dTMP + ADP + H(+). Catalyzes the transfer of the gamma-phospho group of ATP to thymidine to generate dTMP in the salvage pathway of pyrimidine synthesis. The dTMP serves as a substrate for DNA polymerase during viral DNA replication. Allows the virus to be reactivated and to grow in non-proliferative cells lacking a high concentration of phosphorylated nucleic acid precursors. The chain is Thymidine kinase from Epstein-Barr virus (strain AG876) (HHV-4).